The primary structure comprises 57 residues: UPF0391 membrane protein Patl_0263 (57 aa).

The next 2 helical transmembrane spans lie at 8–28 and 30–50; these read FFVL…GVAA and IAKV…VLAF.

It belongs to the UPF0391 family.

It is found in the cell membrane. This Pseudoalteromonas atlantica (strain T6c / ATCC BAA-1087) protein is UPF0391 membrane protein Patl_0263.